The primary structure comprises 359 residues: Type-1 angiotensin II receptor (359 aa).

Topologically, residues 1-25 are extracellular; the sequence is MILNSSTEDGIKRIQDDCPKAGRHN. N4 is a glycosylation site (N-linked (GlcNAc...) asparagine). Angiotensin II is bound by residues Q15 and D17. 2 disulfide bridges follow: C18-C274 and C101-C180. Residues 26 to 55 form a helical membrane-spanning segment; it reads YIFVMIPTLYSIIFVVGIFGNSLVVIVIYF. At 56-61 the chain is on the cytoplasmic side; that stretch reads YMKLKT. Residues 62-89 form a helical membrane-spanning segment; the sequence is VASVFLLNLALADLCFLLTLPLWAVYTA. The Extracellular portion of the chain corresponds to 90–98; it reads MEYRWPFGN. The chain crosses the membrane as a helical span at residues 99–125; it reads YLCKIASASVSFNLYASVFLLTCLSID. At 126-141 the chain is on the cytoplasmic side; that stretch reads RYVAIVHPMKSPVRRT. The helical transmembrane segment at 142-165 threads the bilayer; that stretch reads MLMAKVTCIIIWLLAGLASLPTII. The Extracellular segment spans residues 166-190; that stretch reads HRNVFFIENTNITVCAFHYESQNST. Residue R167 coordinates angiotensin II. The N-linked (GlcNAc...) asparagine glycan is linked to N176. Angiotensin II is bound by residues F182, H183, and Y184. Residue N188 is glycosylated (N-linked (GlcNAc...) asparagine). A helical transmembrane segment spans residues 191–216; it reads LPIGLGLTKNILGFLFPFLIILTSYT. K199 provides a ligand contact to angiotensin II. Over 217-239 the chain is Cytoplasmic; that stretch reads LIWKTLKRAYEIQKNKPRNDDIF. A helical membrane pass occupies residues 240 to 268; the sequence is KIIMAIVLFFFFSWVPHQIFTFLDVLIQL. Over 269–278 the chain is Extracellular; the sequence is GIIHDCKIAD. Residues 279–304 traverse the membrane as a helical segment; sequence IVDTAMPITICIAYFNNCLNPLFYGF. Over 305–359 the chain is Cytoplasmic; sequence LGKKFKKYFLQLLKYIPPKAKSHSSLSTKMSTLSYRPSDHGNASTKKSASCVEVE. Positions 335 to 352 are enriched in polar residues; it reads STLSYRPSDHGNASTKKS. The interval 335–359 is disordered; the sequence is STLSYRPSDHGNASTKKSASCVEVE. A lipid anchor (S-palmitoyl cysteine) is attached at C355.

The protein belongs to the G-protein coupled receptor 1 family. Interacts with MAS1. Interacts with ARRB1. Interacts with FLNA (via filamin repeat 21); increases PKA-mediated phosphorylation of FLNA. C-terminal Ser or Thr residues may be phosphorylated. Adrenal, liver, aorta, kidney, lung, testis and heart.

Its subcellular location is the cell membrane. Receptor for angiotensin II, a vasoconstricting peptide, which acts as a key regulator of blood pressure and sodium retention by the kidney. The activated receptor in turn couples to G-alpha proteins G(q) (GNAQ, GNA11, GNA14 or GNA15) and thus activates phospholipase C and increases the cytosolic Ca(2+) concentrations, which in turn triggers cellular responses such as stimulation of protein kinase C. This Canis lupus familiaris (Dog) protein is Type-1 angiotensin II receptor (AGTR1).